A 332-amino-acid polypeptide reads, in one-letter code: Probable cytosolic iron-sulfur protein assembly protein 1 (332 aa).

WD repeat units lie at residues 9 to 48 (GHTD…LVTT), 52 to 93 (GHNR…WQFL), 98 to 137 (GHEN…DEFE), 144 to 183 (DHTQ…WICV), 188 to 230 (GHES…GGTG), 257 to 295 (AHTR…QWVV), and 302 to 332 (AHGV…IWEV).

This sequence belongs to the WD repeat CIA1 family. In terms of assembly, interacts with NAR1.

The protein localises to the cytoplasm. It localises to the nucleus. In terms of biological role, essential component of the cytosolic iron-sulfur (Fe/S) protein assembly machinery. Required for the maturation of extramitochondrial Fe/S proteins. This is Probable cytosolic iron-sulfur protein assembly protein 1 from Yarrowia lipolytica (strain CLIB 122 / E 150) (Yeast).